Reading from the N-terminus, the 328-residue chain is MSMANFTGGRNSCTFHEEFKQVLLPLVYSVVFLLGLPLNAVVIGQIWLARKALTRTTIYMLNLAMADLLYVCSLPLLIYNYTQKDYWPFGDFTCKFVRFQFYTNLHGSILFLTCISVQRYMGICHPLASWHKKKGKKLTWLVCAAVWFIVIAQCLPTFVFASTGTQRNRTVCYDLSPPDRSTSYFPYGITLTITGFLLPFAAILACYCSMARILCQKDELIGLAVHKKKDKAVRMIIIVVIVFSISFFPFHLTKTIYLIVRSSASLPCPTLQAFAIAYKCTRPFASMNSVLDPILFYFTQRKFRESTRYLLDKMSSKWRQDHCISYGS.

The Extracellular portion of the chain corresponds to 1–22 (MSMANFTGGRNSCTFHEEFKQV). Residue asparagine 5 is glycosylated (N-linked (GlcNAc...) asparagine). Residues 23 to 43 (LLPLVYSVVFLLGLPLNAVVI) traverse the membrane as a helical segment. Residues 44-57 (GQIWLARKALTRTT) are Cytoplasmic-facing. The chain crosses the membrane as a helical span at residues 58–78 (IYMLNLAMADLLYVCSLPLLI). Residues 79–96 (YNYTQKDYWPFGDFTCKF) lie on the Extracellular side of the membrane. A disulfide bridge links cysteine 94 with cysteine 172. A helical membrane pass occupies residues 97 to 117 (VRFQFYTNLHGSILFLTCISV). Topologically, residues 118–139 (QRYMGICHPLASWHKKKGKKLT) are cytoplasmic. The helical transmembrane segment at 140-160 (WLVCAAVWFIVIAQCLPTFVF) threads the bilayer. The Extracellular segment spans residues 161 to 189 (ASTGTQRNRTVCYDLSPPDRSTSYFPYGI). A helical membrane pass occupies residues 190 to 210 (TLTITGFLLPFAAILACYCSM). The Cytoplasmic segment spans residues 211–231 (ARILCQKDELIGLAVHKKKDK). A helical transmembrane segment spans residues 232–252 (AVRMIIIVVIVFSISFFPFHL). At 253 to 275 (TKTIYLIVRSSASLPCPTLQAFA) the chain is on the extracellular side. Residues 276-298 (IAYKCTRPFASMNSVLDPILFYF) form a helical membrane-spanning segment. Residues 299–323 (TQRKFRESTRYLLDKMSSKWRQDHC) lie on the Cytoplasmic side of the membrane.

It belongs to the G-protein coupled receptor 1 family.

It localises to the cell membrane. Receptor for extracellular ADP &gt; UTP &gt; ATP = UDP. The activity of this receptor is mediated by G proteins which activate a phosphatidylinositol-calcium second messenger system. This chain is P2Y purinoceptor 3 (P2RY3), found in Gallus gallus (Chicken).